Here is a 369-residue protein sequence, read N- to C-terminus: Phenylalanine--tRNA ligase alpha subunit (369 aa).

Mg(2+) is bound at residue Glu-269.

Belongs to the class-II aminoacyl-tRNA synthetase family. Phe-tRNA synthetase alpha subunit type 1 subfamily. As to quaternary structure, tetramer of two alpha and two beta subunits. Mg(2+) serves as cofactor.

It is found in the cytoplasm. The catalysed reaction is tRNA(Phe) + L-phenylalanine + ATP = L-phenylalanyl-tRNA(Phe) + AMP + diphosphate + H(+). This chain is Phenylalanine--tRNA ligase alpha subunit, found in Brucella canis (strain ATCC 23365 / NCTC 10854 / RM-666).